The chain runs to 521 residues: Importin subunit alpha-4 (521 aa).

The segment at 1–29 is disordered; sequence MAENPGLENHRIKSFKNKGRDVETMRRHR. The residue at position 2 (A2) is an N-acetylalanine. Positions 2-58 constitute an IBB domain; sequence AENPGLENHRIKSFKNKGRDVETMRRHRNEVTVELRKNKRDEHLLKKRNVPQEESLE. Over residues 18–29 the composition is skewed to basic and acidic residues; it reads KGRDVETMRRHR. The short motif at 43 to 52 is the Nuclear localization signal element; that stretch reads EHLLKKRNVP. Phosphoserine occurs at positions 56 and 60. The ARM 1; truncated repeat unit spans residues 66–106; the sequence is FKAQNVTLEAILQNATSDNPVVQLSAVQAARKLLSSDRNPP. ARM repeat units follow at residues 107–149, 150–194, 195–233, 234–278, 279–318, 319–360, 361–400, and 401–443; these read IDDL…TSAQ, TQAV…CRDY, VISL…NKDP, PPPM…EQIQ, MVID…TDEQ, TQVV…NQQQ, VQAV…ISGR, and KDQV…IMAG. Positions 137-229 are NLS binding site (major); the sequence is WALTNIASGT…VTWVIVNLCR (93 aa). Residues 306 to 394 are NLS binding site (minor); sequence RAVGNIVTGT…QKEAAWAISN (89 aa). One copy of the ARM 10; atypical repeat lies at 447-485; it reads STIAEIIEECGGLEKIEVLQQHENEDIYKLAFEIIDQYF. Position 484 is a phosphotyrosine (Y484).

The protein belongs to the importin alpha family. Forms a complex with importin subunit beta-1. Interacts with DDX21. Interacts with NCBP1, NCBP2/CBP20 and NCBP3. Interacts with RCC1. Interacts with ZC3H11A. As to expression, detected more or less in all tissues examined (Ehrlich ascites tumor cells, testis, kidney, spleen, liver, heart, lung, thymus, skeletal muscle, cerebellum and brain (without cerebellum)).

It localises to the cytoplasm. The protein resides in the nucleus. Functions in nuclear protein import as an adapter protein for nuclear receptor KPNB1. Binds specifically and directly to substrates containing either a simple or bipartite NLS motif. Docking of the importin/substrate complex to the nuclear pore complex (NPC) is mediated by KPNB1 through binding to nucleoporin FxFG repeats and the complex is subsequently translocated through the pore by an energy requiring, Ran-dependent mechanism. At the nucleoplasmic side of the NPC, Ran binds to importin-beta and the three components separate and importin-alpha and -beta are re-exported from the nucleus to the cytoplasm where GTP hydrolysis releases Ran from importin. The directionality of nuclear import is thought to be conferred by an asymmetric distribution of the GTP- and GDP-bound forms of Ran between the cytoplasm and nucleus. In vitro, mediates the nuclear import of human cytomegalovirus UL84 by recognizing a non-classical NLS. This Mus musculus (Mouse) protein is Importin subunit alpha-4 (Kpna3).